The chain runs to 150 residues: Large ribosomal subunit protein bL9 (150 aa).

Belongs to the bacterial ribosomal protein bL9 family.

Its function is as follows. Binds to the 23S rRNA. This is Large ribosomal subunit protein bL9 from Pediococcus pentosaceus (strain ATCC 25745 / CCUG 21536 / LMG 10740 / 183-1w).